The following is a 236-amino-acid chain: 7-cyano-7-deazaguanine synthase (236 aa).

An ATP-binding site is contributed by 7–17; it reads CSGGLDSVSLA. The Zn(2+) site is built by C185, C193, C196, and C199.

It belongs to the QueC family. Zn(2+) serves as cofactor.

The catalysed reaction is 7-carboxy-7-deazaguanine + NH4(+) + ATP = 7-cyano-7-deazaguanine + ADP + phosphate + H2O + H(+). The protein operates within purine metabolism; 7-cyano-7-deazaguanine biosynthesis. In terms of biological role, catalyzes the ATP-dependent conversion of 7-carboxy-7-deazaguanine (CDG) to 7-cyano-7-deazaguanine (preQ(0)). This chain is 7-cyano-7-deazaguanine synthase, found in Agrobacterium fabrum (strain C58 / ATCC 33970) (Agrobacterium tumefaciens (strain C58)).